Consider the following 360-residue polypeptide: Replication-associated protein (360 aa).

One can recognise a CRESS-DNA virus Rep endonuclease domain in the interval 11 to 114 (SHRNANTFLT…PLAVFERGTF (104 aa)). Positions 18 to 21 (FLTY) match the RCR-1 motif. 3 residues coordinate a divalent metal cation: Glu52, His60, and His62. Positions 60 to 62 (HLH) match the RCR-2 motif. Catalysis depends on Tyr100, which acts as the For DNA cleavage activity. An RCR-3 motif is present at residues 100 to 103 (YILK). A divalent metal cation is bound at residue Glu104. Residues 175–187 (SANKLFPEIQEEF) are oligomerization. Residue 229–236 (GPTRTGKS) participates in ATP binding. Positions 252–270 (VDWSSYNEDAIYNIVDDIP) are transactivation. The Nuclear localization signal motif lies at 292–303 (KYGKKKKVQKKS).

The protein belongs to the geminiviridae Rep protein family. As to quaternary structure, homooligomer. Rep binds to repeated DNA motifs (iterons). Forms the O-complex, which is a Rep-DNA complex involved in the initiation of RCR. Part of the C- and V-complexes which are RepA-Rep-DNA complexes involved in the c-sense and v-sense transcription. Mg(2+) serves as cofactor. Requires Mn(2+) as cofactor.

Its subcellular location is the host nucleus. Functionally, essential for the replication of viral ssDNA. The closed circular ssDNA genome is first converted to a superhelical dsDNA. Rep binds a specific region at the genome origin of replication. It introduces an endonucleolytic nick within the conserved sequence 5'-TAATATTAC-3' in the intergenic region of the genome present in all geminiviruses, thereby initiating the rolling circle replication (RCR). Following cleavage, binds covalently to the 5'-phosphate of DNA as a tyrosyl ester. The cleavage gives rise to a free 3'-OH that serves as a primer for the cellular DNA polymerase. The polymerase synthesizes the (+) strand DNA by rolling circle mechanism. After one round of replication, a Rep-catalyzed nucleotidyl transfer reaction releases a circular single-stranded virus genome, thereby terminating the replication. Displays origin-specific DNA cleavage, nucleotidyl transferase, ATPase and helicase activities. Acts as an inhibitor of C-sense gene transcription. In Avena sativa (Oat), this protein is Replication-associated protein.